We begin with the raw amino-acid sequence, 673 residues long: DNA ligase (673 aa).

NAD(+)-binding positions include 33-37, 82-83, and E115; these read DAEYD and SL. The active-site N6-AMP-lysine intermediate is the K117. NAD(+) contacts are provided by R138, E175, K292, and K316. Residues C410, C413, C428, and C434 each coordinate Zn(2+). The BRCT domain maps to 593-673; it reads VGDNPFKEKT…TFLAWSKPYL (81 aa).

Belongs to the NAD-dependent DNA ligase family. LigA subfamily. It depends on Mg(2+) as a cofactor. The cofactor is Mn(2+).

The enzyme catalyses NAD(+) + (deoxyribonucleotide)n-3'-hydroxyl + 5'-phospho-(deoxyribonucleotide)m = (deoxyribonucleotide)n+m + AMP + beta-nicotinamide D-nucleotide.. Functionally, DNA ligase that catalyzes the formation of phosphodiester linkages between 5'-phosphoryl and 3'-hydroxyl groups in double-stranded DNA using NAD as a coenzyme and as the energy source for the reaction. It is essential for DNA replication and repair of damaged DNA. The protein is DNA ligase of Pasteurella multocida (strain Pm70).